The sequence spans 283 residues: Protein/nucleic acid deglycase HchA (283 aa).

His-86, Glu-91, and His-123 together coordinate Zn(2+). Cys-185 functions as the Nucleophile in the catalytic mechanism.

This sequence belongs to the peptidase C56 family. HchA subfamily. Homodimer.

It is found in the cytoplasm. It catalyses the reaction N(omega)-(1-hydroxy-2-oxopropyl)-L-arginyl-[protein] + H2O = lactate + L-arginyl-[protein] + H(+). It carries out the reaction N(6)-(1-hydroxy-2-oxopropyl)-L-lysyl-[protein] + H2O = lactate + L-lysyl-[protein] + H(+). The catalysed reaction is S-(1-hydroxy-2-oxopropyl)-L-cysteinyl-[protein] + H2O = lactate + L-cysteinyl-[protein] + H(+). The enzyme catalyses N(omega)-(1-hydroxy-2-oxoethyl)-L-arginyl-[protein] + H2O = L-arginyl-[protein] + glycolate + H(+). It catalyses the reaction N(6)-(1-hydroxy-2-oxoethyl)-L-lysyl-[protein] + H2O = glycolate + L-lysyl-[protein] + H(+). It carries out the reaction S-(1-hydroxy-2-oxoethyl)-L-cysteinyl-[protein] + H2O = glycolate + L-cysteinyl-[protein] + H(+). The catalysed reaction is N(2)-(1-hydroxy-2-oxopropyl)-dGTP + H2O = lactate + dGTP + H(+). The enzyme catalyses N(2)-(1-hydroxy-2-oxopropyl)-GTP + H2O = lactate + GTP + H(+). It catalyses the reaction N(2)-(1-hydroxy-2-oxopropyl)-GDP + H2O = lactate + GDP + H(+). It carries out the reaction N(2)-(1-hydroxy-2-oxopropyl)-GMP + H2O = lactate + GMP + H(+). The catalysed reaction is N(2)-(1-hydroxy-2-oxoethyl)-dGTP + H2O = dGTP + glycolate + H(+). The enzyme catalyses N(2)-(1-hydroxy-2-oxoethyl)-GTP + H2O = glycolate + GTP + H(+). It catalyses the reaction N(2)-(1-hydroxy-2-oxoethyl)-GDP + H2O = glycolate + GDP + H(+). It carries out the reaction N(2)-(1-hydroxy-2-oxoethyl)-GMP + H2O = glycolate + GMP + H(+). The catalysed reaction is an N(2)-(1-hydroxy-2-oxopropyl)-guanosine in RNA + H2O = a guanosine in RNA + lactate + H(+). The enzyme catalyses an N(2)-(1-hydroxy-2-oxopropyl)-2'-deoxyguanosine in DNA + H2O = a 2'-deoxyguanosine in DNA + lactate + H(+). It catalyses the reaction an N(2)-(1-hydroxy-2-oxoethyl)-guanosine in RNA + H2O = a guanosine in RNA + glycolate + H(+). It carries out the reaction an N(2)-(1-hydroxy-2-oxoethyl)-2'-deoxyguanosine in DNA + H2O = a 2'-deoxyguanosine in DNA + glycolate + H(+). Its function is as follows. Protein and nucleotide deglycase that catalyzes the deglycation of the Maillard adducts formed between amino groups of proteins or nucleotides and reactive carbonyl groups of glyoxals. Thus, functions as a protein deglycase that repairs methylglyoxal- and glyoxal-glycated proteins, and releases repaired proteins and lactate or glycolate, respectively. Deglycates cysteine, arginine and lysine residues in proteins, and thus reactivates these proteins by reversing glycation by glyoxals. Acts on early glycation intermediates (hemithioacetals and aminocarbinols), preventing the formation of Schiff bases and advanced glycation endproducts (AGE). Also functions as a nucleotide deglycase able to repair glycated guanine in the free nucleotide pool (GTP, GDP, GMP, dGTP) and in DNA and RNA. Is thus involved in a major nucleotide repair system named guanine glycation repair (GG repair), dedicated to reversing methylglyoxal and glyoxal damage via nucleotide sanitization and direct nucleic acid repair. Plays an important role in protecting cells from carbonyl stress. The sequence is that of Protein/nucleic acid deglycase HchA from Escherichia coli O45:K1 (strain S88 / ExPEC).